Here is a 187-residue protein sequence, read N- to C-terminus: Ribonuclease HII (187 aa).

Positions 1-187 constitute an RNase H type-2 domain; that stretch reads MIILGIDEAG…YKPVQVLLNE (187 aa). Positions 7, 8, and 99 each coordinate a divalent metal cation.

The protein belongs to the RNase HII family. It depends on Mn(2+) as a cofactor. Mg(2+) is required as a cofactor.

The protein resides in the cytoplasm. The enzyme catalyses Endonucleolytic cleavage to 5'-phosphomonoester.. Endonuclease that specifically degrades the RNA of RNA-DNA hybrids. This Francisella tularensis subsp. mediasiatica (strain FSC147) protein is Ribonuclease HII.